We begin with the raw amino-acid sequence, 2221 residues long: MSECLTYFNELKDLVRKWVPDEDTYVEQKTVLLSQVNFSSIVTEGLKLLSTLIEVDSCVKHGCIHNRSKTVNQILYDHRIVGPTLPDVVPDGYRVSGSTLILLETFVRVNQESFECKYRHDFEKLMQLSKDLAKCGLTLVPVIDGRSSYYIERLPDWVIERMRWLLLRIMSNLRDSGEKIEEMEYERLVHSLSNMENQNLGLESLASLREEGLDYKTRLTKTLKEGIYSNMTTSECRVGIAKLYDHFCLLRDSGQYEDVYTTTSRSEMITWLKTHELVQMSSSERETLIEAETCKFCQIHMYAVLKDLVLLRKGWKGSRCRDANEILAHKSLLSDCNKIKGLKVLNTRRNTLLCLDIIVLNSLINLIKLQYTDLQYLINNHFKSVNDRLVSVDLIINKLDKKLTSDPNWLCKLRTKIGHKLKIYDLDHVISWLRPIEVSHWYEFKLERDNSGECVKPTIKYKKSGVGDCQGEDCNKDVITDDSTFSDYLDALSTLSMGLMNSMKTSSATKLVVNDERNYFGTVQCDECYFQDLDINYGTTLIYQKTGERTRCYGLMSKEGGGPDVYKVGKSFYADPKRYFLPIMSSEVILKMCREMLSWLDWLSEKEMMDVRTKLYTLVISILTVPSKRVQIYLQGFRYFIMAYVNEFHVKELVCKLKVKPLTRAELSVFTQMDDLVALLLTGTSEEHMTKSFKFILNLSYLCHLITKETPDRLTDQIKCFEKFLEPKLTFNSVILNLDSSPQLTEGTEEKIIGDLKKLFSKDLGVLDLKEPGVSKEVLSLCSSCFNNGMLSLPKVLSRDPQSPSFTSTALDISSNKSVVVPKLNEVGETITQYDYQSLLSSVVVEMAQSFKDKLRFKLDRRSLQYAIYKRLTNMVSKNEFRSKDDPNDSGILEDIEDLVDEGTHKLINEIEANVSDCLSKMSSGCNKSNQSSKGLKKFEKVDLLQKLWSREYMSLILSETSFHEVKDFDPSLLPSESYQEMCDAVYDSVYRNEFFTEKFLKLCPLELLIKNLATKHYEEGDYFECFKYLLIGAGCDNRVGRFDHRSRARLGFKDTATLVKEESRISSRESNSEAISKRLDKSFFTNSSLRNLCFYSEESPTYRSSVSSSVGKLKFGLSYKEQVGSNRELYIGDLNTKLTSRLIEDYFESLTSECRFSCLNNDSEFERALLDMKSVVRLSGLAVSLDHSKWGPYMSPAIFNALFSNLDLQLKDGGLIDKSPIENLLNWHLHKIVEVPYNVVEAYLKGYTKRSLGLMDRSSSSMTEDYFFRQFAKGVVPSHITSVLDMGQGILHNASDYYGLLTEQFITLCLELCFDVKMTAYTSSDDEIMLSNSYSLKRESDDDLLDMEKCKEILEFHYYLSSKLNKFISPKTVAGSFASEFKSRFFIWSQEVPLLTKFVAAALHNVKAKSPHQLAETIDTILDQCAANGVSIEIINELSKRTNRLISYSGHPVDPFLCVFTTDLKDWVDGSRGYRLQRSIESIINSEEILSTIRDSCRQLFYMIRSGRIQEEYLISALQSSPDDCLRQMLKITGTNDSLIEEALTTRWLNLRAFGDLRLVLRTKIMTGTRILDKEEVPSLIKSVQSKLSKNFVRGAKKIITDAINKSAFQSSICSGFIGLCKSMGSKCVRDGSGGFIYIKDLLKKIDRHTNCEVCCPLLSVFCEHSLRQVAPYSRPLLWDYFSLTFSNACELGNWVFSKVELPRPPLGSMNPNFFWPVKPGSHSELEDKVNMNHVLYSIKRNFPDLFDEHIAPFLSDLNSLKVSWVQRIKFLDLCVAMDMSSECLGIISHIMRKRREELYIVKQEELSVCHIRESCSLEKGLQLNSVEICQNFLTQLLFESMLNPVLLSTSQFKKYFWYGEVEFLPNDADHDLGQLTQFIMDCKLLNISRCMCLDDLDVGYVHSKIELSQVFINLSTFINLVDWENRESYQSFDEVLIHSNADHIPLEIGIILSHTRKSFKFRYERKTNYYVKCGITIQKSEISSFSTTLSDGFELHVEEIDCYVSGSEGDHISLDGVGLVPLHPLFSGKEALDLNKLLSDQDIEFKQISLVFSKVKLDFKDHVKDLKNKFSYKLQGPEQGLEPLHLDKGQIMERNTVVSRLEVPVTSRSLFLALEALDPGNRPRFLSSLHEYMRKRPGKKDPCFVRMTQQDLCLLVELYEAAFMQVLSAVSDWIEFGCFALCFSKTLNCIMIADDGGDYRLKGRPCKTLSAQKTLTDIE.

The segment at 29 to 292 (KTVLLSQVNF…SERETLIEAE (264 aa)) is endonuclease. 3 residues coordinate Mn(2+): Glu54, Asp91, and Glu104. The active site involves Lys117. Positions 1171 to 1369 (LDMKSVVRLS…YLSSKLNKFI (199 aa)) constitute a RdRp catalytic domain. Mg(2+) is bound at residue Asp1327.

This sequence belongs to the Bunyavirales RNA polymerase family. Homomultimer; the oligomeric structure is essential for the polymerase activity. Interacts with nucleoprotein N. Interacts with protein Z; this interaction inhibits viral transcription and replication, Z partially blocks the product exit tunnel for the releasing nascent RNA product. The cofactor is Mn(2+). It depends on Mg(2+) as a cofactor.

Its subcellular location is the virion. It localises to the host cytoplasm. It catalyses the reaction RNA(n) + a ribonucleoside 5'-triphosphate = RNA(n+1) + diphosphate. In terms of biological role, RNA-dependent RNA polymerase, which is responsible for the replication and transcription of the viral RNA genome using antigenomic RNA as an intermediate. During transcription, synthesizes subgenomic RNAs and assures their capping by a cap-snatching mechanism, which involves the endonuclease activity cleaving the host capped pre-mRNAs. These short capped RNAs are then used as primers for viral transcription. The 3'-end of subgenomic mRNAs molecules are heterogeneous and not polyadenylated. The replicase function is to direct synthesis of antigenomic and genomic RNA which are encapsidated and non capped. As a consequence of the use of the same enzyme for both transcription and replication, these mechanisms need to be well coordinated. These processes may be regulated by proteins N and Z in a dose-dependent manner. Z protein inhibits the viral polymerase L und thus the viral transcription and RNA synthesis. This Sigmodon hispidus (Hispid cotton rat) protein is RNA-directed RNA polymerase L.